A 118-amino-acid chain; its full sequence is ATP synthase subunit g, mitochondrial (118 aa).

This sequence belongs to the ATPase g subunit family. In terms of assembly, F-type ATPases have 2 components, CF(1) - the catalytic core - and CF(0) - the membrane proton channel.

Its subcellular location is the mitochondrion membrane. Mitochondrial membrane ATP synthase (F(1)F(0) ATP synthase or Complex V) produces ATP from ADP in the presence of a proton gradient across the membrane which is generated by electron transport complexes of the respiratory chain. F-type ATPases consist of two structural domains, F(1) - containing the extramembraneous catalytic core, and F(0) - containing the membrane proton channel, linked together by a central stalk and a peripheral stalk. During catalysis, ATP synthesis in the catalytic domain of F(1) is coupled via a rotary mechanism of the central stalk subunits to proton translocation. Part of the complex F(0) domain. Minor subunit located with subunit a in the membrane. The polypeptide is ATP synthase subunit g, mitochondrial (atp20) (Schizosaccharomyces pombe (strain 972 / ATCC 24843) (Fission yeast)).